A 215-amino-acid chain; its full sequence is Orotate phosphoribosyltransferase (215 aa).

Residue K25 coordinates 5-phospho-alpha-D-ribose 1-diphosphate. 33–34 (FF) provides a ligand contact to orotate. 5-phospho-alpha-D-ribose 1-diphosphate is bound by residues 71 to 72 (YK), R98, K99, K102, H104, and 124 to 132 (DDVITAGTA). Residues T128 and R156 each coordinate orotate.

The protein belongs to the purine/pyrimidine phosphoribosyltransferase family. PyrE subfamily. As to quaternary structure, homodimer.

The enzyme catalyses orotidine 5'-phosphate + diphosphate = orotate + 5-phospho-alpha-D-ribose 1-diphosphate. It functions in the pathway pyrimidine metabolism; UMP biosynthesis via de novo pathway; UMP from orotate: step 1/2. Catalyzes the transfer of a ribosyl phosphate group from 5-phosphoribose 1-diphosphate to orotate, leading to the formation of orotidine monophosphate (OMP). The sequence is that of Orotate phosphoribosyltransferase (ura5) from Schizosaccharomyces pombe (strain 972 / ATCC 24843) (Fission yeast).